The primary structure comprises 211 residues: Large ribosomal subunit protein uL3 (211 aa).

Residues 116–142 are disordered; the sequence is GTSGVMKKHGFSGNRASHGVSRNHRLG.

It belongs to the universal ribosomal protein uL3 family. In terms of assembly, part of the 50S ribosomal subunit. Forms a cluster with proteins L14 and L19.

In terms of biological role, one of the primary rRNA binding proteins, it binds directly near the 3'-end of the 23S rRNA, where it nucleates assembly of the 50S subunit. This chain is Large ribosomal subunit protein uL3, found in Fusobacterium nucleatum subsp. nucleatum (strain ATCC 25586 / DSM 15643 / BCRC 10681 / CIP 101130 / JCM 8532 / KCTC 2640 / LMG 13131 / VPI 4355).